We begin with the raw amino-acid sequence, 185 residues long: dTTP/UTP pyrophosphatase (185 aa).

The Proton acceptor role is filled by D64.

Belongs to the Maf family. YhdE subfamily. Requires a divalent metal cation as cofactor.

The protein resides in the cytoplasm. The catalysed reaction is dTTP + H2O = dTMP + diphosphate + H(+). The enzyme catalyses UTP + H2O = UMP + diphosphate + H(+). Nucleoside triphosphate pyrophosphatase that hydrolyzes dTTP and UTP. May have a dual role in cell division arrest and in preventing the incorporation of modified nucleotides into cellular nucleic acids. The protein is dTTP/UTP pyrophosphatase of Thermococcus gammatolerans (strain DSM 15229 / JCM 11827 / EJ3).